A 109-amino-acid chain; its full sequence is U4-lycotoxin-Ls1a (109 aa).

The first 22 residues, 1–22 (MKVLVLFSVLFLTLFSYSSTEA), serve as a signal peptide directing secretion. Residues 23–44 (IDEFDSDAEEDMLSLMANEQVR) constitute a propeptide that is removed on maturation. The segment at 45 to 88 (AKACTPRLHDCSHDRHSCCRGELFKDVCYCFYPEGEDKTEVCSC) is knottin domain. 4 disulfide bridges follow: Cys-48–Cys-63, Cys-55–Cys-72, Cys-62–Cys-88, and Cys-74–Cys-86. A linear cationic cytotoxin domain region spans residues 89–108 (QQPKSHKYIEKVVDKAKTVV).

It belongs to the neurotoxin 19 (CSTX) family. 05 (U4-Lctx) subfamily. In terms of tissue distribution, expressed by the venom gland.

The protein resides in the secreted. Enhances the high-affinity desensitization of human P2RX3 purinoceptors. The polypeptide is U4-lycotoxin-Ls1a (Lycosa singoriensis (Wolf spider)).